Here is a 308-residue protein sequence, read N- to C-terminus: 1D-myo-inositol 2-acetamido-2-deoxy-alpha-D-glucopyranoside deacetylase (308 aa).

Zn(2+) contacts are provided by H18, D21, and H153.

It belongs to the MshB deacetylase family. It depends on Zn(2+) as a cofactor.

It carries out the reaction 1D-myo-inositol 2-acetamido-2-deoxy-alpha-D-glucopyranoside + H2O = 1D-myo-inositol 2-amino-2-deoxy-alpha-D-glucopyranoside + acetate. Its function is as follows. Catalyzes the deacetylation of 1D-myo-inositol 2-acetamido-2-deoxy-alpha-D-glucopyranoside (GlcNAc-Ins) in the mycothiol biosynthesis pathway. The sequence is that of 1D-myo-inositol 2-acetamido-2-deoxy-alpha-D-glucopyranoside deacetylase from Salinispora arenicola (strain CNS-205).